A 74-amino-acid chain; its full sequence is Putative membrane protein insertion efficiency factor (74 aa).

The protein belongs to the UPF0161 family.

It is found in the cell inner membrane. Its function is as follows. Could be involved in insertion of integral membrane proteins into the membrane. The protein is Putative membrane protein insertion efficiency factor of Endomicrobium trichonymphae.